The sequence spans 189 residues: GMP synthase [glutamine-hydrolyzing] subunit A (189 aa).

Positions 5–189 (KIIVINNYGQ…MNFFKVCEDY (185 aa)) constitute a Glutamine amidotransferase type-1 domain. C79 (nucleophile) is an active-site residue. Catalysis depends on residues H166 and E168.

In terms of assembly, heterodimer composed of a glutamine amidotransferase subunit (A) and a GMP-binding subunit (B).

It carries out the reaction XMP + L-glutamine + ATP + H2O = GMP + L-glutamate + AMP + diphosphate + 2 H(+). Its pathway is purine metabolism; GMP biosynthesis; GMP from XMP (L-Gln route): step 1/1. Its function is as follows. Catalyzes the synthesis of GMP from XMP. This is GMP synthase [glutamine-hydrolyzing] subunit A from Methanococcoides burtonii (strain DSM 6242 / NBRC 107633 / OCM 468 / ACE-M).